The following is a 351-amino-acid chain: Spermidine/putrescine import ATP-binding protein PotA (351 aa).

Residues 6–236 (LELRNVTKEY…PENAWVANFI (231 aa)) enclose the ABC transporter domain. Residue 38–45 (GPSGCGKT) coordinates ATP.

Belongs to the ABC transporter superfamily. Spermidine/putrescine importer (TC 3.A.1.11.1) family. As to quaternary structure, the complex is composed of two ATP-binding proteins (PotA), two transmembrane proteins (PotB and PotC) and a solute-binding protein (PotD).

Its subcellular location is the cell membrane. The enzyme catalyses ATP + H2O + polyamine-[polyamine-binding protein]Side 1 = ADP + phosphate + polyamineSide 2 + [polyamine-binding protein]Side 1.. Functionally, part of the ABC transporter complex PotABCD involved in spermidine/putrescine import. Responsible for energy coupling to the transport system. This Mycoplasma capricolum subsp. capricolum (strain California kid / ATCC 27343 / NCTC 10154) protein is Spermidine/putrescine import ATP-binding protein PotA.